The sequence spans 540 residues: Synaptotagmin-3 (540 aa).

Residues 9-29 (GIIGFVIGIPIGLILGFFVLI) traverse the membrane as a helical segment. In terms of domain architecture, SMP-LTD spans 67-249 (DYERVDWFNK…WPQVLEIPIL (183 aa)). Residues 227 to 509 (QETIKRQVSS…ELGHVDINLD (283 aa)) are phospholipid binding. C2 domains lie at 240–363 (WPQV…EFNL) and 401–521 (RKES…NQKY). Ca(2+) is bound by residues Asp277, Asp283, Asp333, Asp335, and Asp341.

Belongs to the synaptotagmin family. Requires Ca(2+) as cofactor.

The protein resides in the membrane. In terms of biological role, may be involved in membrane trafficking. This is Synaptotagmin-3 (SYT3) from Arabidopsis thaliana (Mouse-ear cress).